The primary structure comprises 341 residues: L-threonine 3-dehydrogenase (341 aa).

Cys-38 provides a ligand contact to Zn(2+). Residues Thr-40 and His-43 each act as charge relay system in the active site. Zn(2+) contacts are provided by His-63, Glu-64, Cys-93, Cys-96, Cys-99, and Cys-107. NAD(+) contacts are provided by residues Ile-175, Asp-195, Arg-200, 262–264 (LGI), and 286–287 (IY).

The protein belongs to the zinc-containing alcohol dehydrogenase family. In terms of assembly, homotetramer. Zn(2+) serves as cofactor.

It is found in the cytoplasm. It catalyses the reaction L-threonine + NAD(+) = (2S)-2-amino-3-oxobutanoate + NADH + H(+). It participates in amino-acid degradation; L-threonine degradation via oxydo-reductase pathway; glycine from L-threonine: step 1/2. Its function is as follows. Catalyzes the NAD(+)-dependent oxidation of L-threonine to 2-amino-3-ketobutyrate. This chain is L-threonine 3-dehydrogenase, found in Escherichia coli O139:H28 (strain E24377A / ETEC).